The sequence spans 22 residues: Caerin-3.2 (22 aa).

K22 carries the lysine amide modification.

As to expression, expressed by the skin parotoid and/or rostral glands.

It localises to the secreted. Its function is as follows. Antibacterial peptide, that adopts an alpha helical conformation which can disrupt bacterial membranes. Each caerin displays a different antimicrobial specificity. The sequence is that of Caerin-3.2 from Ranoidea caerulea (Green tree frog).